A 239-amino-acid polypeptide reads, in one-letter code: Uridylate kinase (239 aa).

12-15 (KLSG) is a binding site for ATP. The interval 20 to 25 (GEKGFG) is involved in allosteric activation by GTP. G54 contacts UMP. Residues G55 and R59 each coordinate ATP. Residues D72 and 133–140 (TGNPFFST) contribute to the UMP site. Residues Y166 and D169 each coordinate ATP.

The protein belongs to the UMP kinase family. Homohexamer.

It localises to the cytoplasm. It catalyses the reaction UMP + ATP = UDP + ADP. Its pathway is pyrimidine metabolism; CTP biosynthesis via de novo pathway; UDP from UMP (UMPK route): step 1/1. Its activity is regulated as follows. Allosterically activated by GTP. Inhibited by UTP. Catalyzes the reversible phosphorylation of UMP to UDP. In Caldicellulosiruptor saccharolyticus (strain ATCC 43494 / DSM 8903 / Tp8T 6331), this protein is Uridylate kinase.